The sequence spans 139 residues: MRTLWIMAVLLLGVEGSLMQFEMLIMKLAKSSGMFWYSAYGCYCGWGGQGRPQDATDRCCFVHDCCYGKATGCDPKKDVYTYSEENGDIVCGGDDPCRKEVCECDKAAAICFRDNMDTYNSKTYWMFPAKNCQEESEPC.

Residues 1-16 form the signal peptide; sequence MRTLWIMAVLLLGVEG. Disulfide bonds link cysteine 42–cysteine 132, cysteine 44–cysteine 60, cysteine 59–cysteine 111, cysteine 65–cysteine 139, cysteine 66–cysteine 104, cysteine 73–cysteine 97, and cysteine 91–cysteine 102. 3 residues coordinate Ca(2+): tyrosine 43, glycine 45, and glycine 47. The active site involves histidine 63. Position 64 (aspartate 64) interacts with Ca(2+). The active site involves aspartate 105.

Belongs to the phospholipase A2 family. Group II subfamily. D49 sub-subfamily. As to quaternary structure, monomer. The cofactor is Ca(2+). Expressed by the venom gland.

It localises to the secreted. The catalysed reaction is a 1,2-diacyl-sn-glycero-3-phosphocholine + H2O = a 1-acyl-sn-glycero-3-phosphocholine + a fatty acid + H(+). Functionally, snake venom phospholipase A2 (PLA2) that inhibits the ADP-(IC(50)=272 nM) and collagen-induced (IC(50)=518 nM) human platelet aggregation in platelet rich plasma. Exhibits very high hydrolytic activities toward the synthetic lecithin, and prefers the anionic micelles (dPPC with deoxycholate) to the zwitterionic micelles (dPPC with Triton X-100). PLA2 catalyzes the calcium-dependent hydrolysis of the 2-acyl groups in 3-sn-phosphoglycerides. This is Acidic phospholipase A2 Tgc-E6 from Trimeresurus gracilis (Kikuchi habu).